We begin with the raw amino-acid sequence, 210 residues long: Large ribosomal subunit protein uL4 (210 aa).

A compositionally biased stretch (polar residues) spans 41–52; it reads QTNARQGTASTK. A disordered region spans residues 41-71; the sequence is QTNARQGTASTKTRAEVRGGGRKPWRQKGTG. Basic residues predominate over residues 60-71; it reads GGRKPWRQKGTG.

Belongs to the universal ribosomal protein uL4 family. In terms of assembly, part of the 50S ribosomal subunit.

Functionally, one of the primary rRNA binding proteins, this protein initially binds near the 5'-end of the 23S rRNA. It is important during the early stages of 50S assembly. It makes multiple contacts with different domains of the 23S rRNA in the assembled 50S subunit and ribosome. Forms part of the polypeptide exit tunnel. The sequence is that of Large ribosomal subunit protein uL4 from Nostoc sp. (strain PCC 7120 / SAG 25.82 / UTEX 2576).